Reading from the N-terminus, the 1454-residue chain is Probable cleavage and polyadenylation specificity factor subunit 1 (1454 aa).

A disordered region spans residues 810 to 843 (EEKEKKAKQTAAQEKEKETEKKKDDAKNEEDQVN). Positions 812 to 843 (KEKKAKQTAAQEKEKETEKKKDDAKNEEDQVN) are enriched in basic and acidic residues.

This sequence belongs to the CPSF1 family. In terms of assembly, CPSF is a heterotetramer composed of four distinct subunits 160 (cpsf-1), 100 (cpsf-2), 70 (cpsf-3), and 30 kDa (cpsf-4).

It localises to the nucleus. Functionally, CPSF plays a key role in pre-mRNA 3'-end formation, recognizing the AAUAAA signal sequence and interacting with poly(A)polymerase and other factors to bring about cleavage and poly(A) addition. This subunit is involved in the RNA recognition step of the polyadenylation reaction. The sequence is that of Probable cleavage and polyadenylation specificity factor subunit 1 from Caenorhabditis briggsae.